The chain runs to 488 residues: 3-octaprenyl-4-hydroxybenzoate carboxy-lyase (488 aa).

Residue N172 participates in Mn(2+) binding. Residues 175 to 177 (IYR), 189 to 191 (RWL), and 194 to 195 (RG) contribute to the prenylated FMN site. E238 is a binding site for Mn(2+). D287 acts as the Proton donor in catalysis.

The protein belongs to the UbiD family. In terms of assembly, homohexamer. Prenylated FMN serves as cofactor. It depends on Mn(2+) as a cofactor.

It localises to the cell membrane. The catalysed reaction is a 4-hydroxy-3-(all-trans-polyprenyl)benzoate + H(+) = a 2-(all-trans-polyprenyl)phenol + CO2. It participates in cofactor biosynthesis; ubiquinone biosynthesis. In terms of biological role, catalyzes the decarboxylation of 3-octaprenyl-4-hydroxy benzoate to 2-octaprenylphenol, an intermediate step in ubiquinone biosynthesis. This chain is 3-octaprenyl-4-hydroxybenzoate carboxy-lyase, found in Halorhodospira halophila (strain DSM 244 / SL1) (Ectothiorhodospira halophila (strain DSM 244 / SL1)).